Reading from the N-terminus, the 131-residue chain is UPF0102 protein YraN (131 aa).

Polar residues predominate over residues 1–19; it reads MATVPTRSGSPRQLTTKQT. Positions 1 to 20 are disordered; sequence MATVPTRSGSPRQLTTKQTG.

The protein belongs to the UPF0102 family.

This chain is UPF0102 protein YraN, found in Escherichia coli O157:H7.